A 270-amino-acid chain; its full sequence is tRNA pseudouridine synthase A (270 aa).

The active-site Nucleophile is the Asp51. Tyr109 serves as a coordination point for substrate.

Belongs to the tRNA pseudouridine synthase TruA family. Homodimer.

The enzyme catalyses uridine(38/39/40) in tRNA = pseudouridine(38/39/40) in tRNA. Functionally, formation of pseudouridine at positions 38, 39 and 40 in the anticodon stem and loop of transfer RNAs. This Burkholderia ambifaria (strain ATCC BAA-244 / DSM 16087 / CCUG 44356 / LMG 19182 / AMMD) (Burkholderia cepacia (strain AMMD)) protein is tRNA pseudouridine synthase A.